The following is a 480-amino-acid chain: Glycogen synthase (480 aa).

Lys-15 contacts ADP-alpha-D-glucose.

Belongs to the glycosyltransferase 1 family. Bacterial/plant glycogen synthase subfamily.

It carries out the reaction [(1-&gt;4)-alpha-D-glucosyl](n) + ADP-alpha-D-glucose = [(1-&gt;4)-alpha-D-glucosyl](n+1) + ADP + H(+). Its pathway is glycan biosynthesis; glycogen biosynthesis. Synthesizes alpha-1,4-glucan chains using ADP-glucose. This is Glycogen synthase from Rhizobium leguminosarum bv. trifolii (strain WSM2304).